The chain runs to 620 residues: MDSHTLVQALIYLGSAALIVPIAVRLGLGSVLGYLIAGCIIGPWGLRLVTDAESILHFAEIGVVLMLFIIGLELDPQRLWKLRAAVFGGGALQMVICGGLLGLFCMLLGLRWQVAELIGMTLALSSTAIAMQAMNERNLMVTQMGRSAFAVLLFQDIAAIPLVAMIPLLATSSASTTMGAFALSALKVAGALVLVVLLGRYVTRPALRFVARSGLREVFSAVALFLVFGFGLLLEEVGLSMAMGAFLAGVLLASSEYRHALESDIEPFKGLLLGLFFIGVGMSIDFGTLLENPLRIVILLLGFLIIKIAMLWLIARPLQVPNKQRRWFAVLLGQGSEFAFVVFGAAQMANVLEPEWAKSLTLAVALSMAATPILLVILNRLEQSSTEEAREADEIDEEQPRVIIAGFGRFGQITGRLLLSSGVKMVVLDHDPDHIETLRKFGMKVFYGDATRMDLLESAGAAKAEVLINAIDDPQTNLQLTEMVKEHFPHLQIIARARDVDHYIRLRQAGVEKPERETFEGALKTGRLALESLGLGPYEARERADVFRRFNIQMVEEMAMVENDTKARAAVYKRTSAMLSEIITEDREHLSLIQRHGWQGTEEGKHTGNMADEPETKPSS.

The next 12 membrane-spanning stretches (helical) occupy residues 4–24, 26–46, 54–74, 90–110, 114–134, 149–169, 178–198, 218–238, 270–290, 294–314, 327–347, and 359–379; these read HTLV…PIAV, LGLG…PWGL, SILH…GLEL, GALQ…LLGL, VAEL…MQAM, FAVL…IPLL, MGAF…VVLL, VFSA…EEVG, GLLL…GTLL, LRIV…LWLI, WFAV…GAAQ, and SLTL…VILN. The region spanning 399–518 is the RCK N-terminal domain; it reads QPRVIIAGFG…AGVEKPERET (120 aa). Residues 597–620 form a disordered region; it reads GWQGTEEGKHTGNMADEPETKPSS.

The protein belongs to the monovalent cation:proton antiporter 2 (CPA2) transporter (TC 2.A.37) family. KefC subfamily. As to quaternary structure, homodimer. Interacts with the regulatory subunit KefF.

Its subcellular location is the cell inner membrane. In terms of biological role, pore-forming subunit of a potassium efflux system that confers protection against electrophiles. Catalyzes K(+)/H(+) antiport. This is Glutathione-regulated potassium-efflux system protein KefC from Escherichia coli O139:H28 (strain E24377A / ETEC).